A 481-amino-acid chain; its full sequence is Glutamyl-tRNA(Gln) amidotransferase subunit A (481 aa).

Catalysis depends on charge relay system residues K76 and S151. Residue S175 is the Acyl-ester intermediate of the active site.

This sequence belongs to the amidase family. GatA subfamily. In terms of assembly, heterotrimer of A, B and C subunits.

The catalysed reaction is L-glutamyl-tRNA(Gln) + L-glutamine + ATP + H2O = L-glutaminyl-tRNA(Gln) + L-glutamate + ADP + phosphate + H(+). Functionally, allows the formation of correctly charged Gln-tRNA(Gln) through the transamidation of misacylated Glu-tRNA(Gln) in organisms which lack glutaminyl-tRNA synthetase. The reaction takes place in the presence of glutamine and ATP through an activated gamma-phospho-Glu-tRNA(Gln). This is Glutamyl-tRNA(Gln) amidotransferase subunit A from Chlorobaculum parvum (strain DSM 263 / NCIMB 8327) (Chlorobium vibrioforme subsp. thiosulfatophilum).